Reading from the N-terminus, the 471-residue chain is Glutamate--tRNA ligase (471 aa).

The 'HIGH' region motif lies at 9 to 19; sequence PSPTGYLHVGG. The Zn(2+) site is built by Cys98, Cys100, Cys125, and His127. The 'KMSKS' region signature appears at 237–241; that stretch reads KLSKR. Position 240 (Lys240) interacts with ATP.

The protein belongs to the class-I aminoacyl-tRNA synthetase family. Glutamate--tRNA ligase type 1 subfamily. Monomer. Requires Zn(2+) as cofactor.

The protein localises to the cytoplasm. It catalyses the reaction tRNA(Glu) + L-glutamate + ATP = L-glutamyl-tRNA(Glu) + AMP + diphosphate. Its function is as follows. Catalyzes the attachment of glutamate to tRNA(Glu) in a two-step reaction: glutamate is first activated by ATP to form Glu-AMP and then transferred to the acceptor end of tRNA(Glu). This Escherichia coli O157:H7 protein is Glutamate--tRNA ligase.